Reading from the N-terminus, the 764-residue chain is FAST kinase domain-containing protein 5, mitochondrial (764 aa).

The N-terminal 27 residues, 1–27 (MAATLKSLKLVRYRAFCSPSAFGAVRS), are a transit peptide targeting the mitochondrion. A Phosphoserine modification is found at serine 95. Lysine 507 is modified (N6-acetyllysine). In terms of domain architecture, RAP spans 697 to 757 (LAVQFTNRNQ…RLEKLAFLHE (61 aa)).

It belongs to the FAST kinase family. As to quaternary structure, found in a complex with GRSF1, DDX28, DHX30 and FASTKD2. Associates with the 12S mitochondrial rRNA (12S mt-rRNA). In terms of tissue distribution, expression detected in spleen, thymus, testis, ovary, colon, heart, smooth muscle, kidney, brain, lung, liver and white adipose tissue with highest expression in heart, smooth muscle, liver and thyroid.

The protein localises to the mitochondrion matrix. The protein resides in the mitochondrion nucleoid. Its function is as follows. Plays an important role in the processing of non-canonical mitochondrial mRNA precursors. The protein is FAST kinase domain-containing protein 5, mitochondrial (FASTKD5) of Homo sapiens (Human).